The primary structure comprises 94 residues: Aspartyl/glutamyl-tRNA(Asn/Gln) amidotransferase subunit C (94 aa).

The protein belongs to the GatC family. Heterotrimer of A, B and C subunits.

It catalyses the reaction L-glutamyl-tRNA(Gln) + L-glutamine + ATP + H2O = L-glutaminyl-tRNA(Gln) + L-glutamate + ADP + phosphate + H(+). It carries out the reaction L-aspartyl-tRNA(Asn) + L-glutamine + ATP + H2O = L-asparaginyl-tRNA(Asn) + L-glutamate + ADP + phosphate + 2 H(+). Its function is as follows. Allows the formation of correctly charged Asn-tRNA(Asn) or Gln-tRNA(Gln) through the transamidation of misacylated Asp-tRNA(Asn) or Glu-tRNA(Gln) in organisms which lack either or both of asparaginyl-tRNA or glutaminyl-tRNA synthetases. The reaction takes place in the presence of glutamine and ATP through an activated phospho-Asp-tRNA(Asn) or phospho-Glu-tRNA(Gln). In Nitratidesulfovibrio vulgaris (strain ATCC 29579 / DSM 644 / CCUG 34227 / NCIMB 8303 / VKM B-1760 / Hildenborough) (Desulfovibrio vulgaris), this protein is Aspartyl/glutamyl-tRNA(Asn/Gln) amidotransferase subunit C.